Here is a 27-residue protein sequence, read N- to C-terminus: Superoxide dismutase [Mn] (27 aa).

The protein belongs to the iron/manganese superoxide dismutase family. Homodimer. The cofactor is Mn(2+).

The catalysed reaction is 2 superoxide + 2 H(+) = H2O2 + O2. In terms of biological role, destroys superoxide anion radicals which are normally produced within the cells and which are toxic to biological systems. This chain is Superoxide dismutase [Mn] (sodA), found in Desulfovibrio desulfuricans.